The sequence spans 317 residues: Melanocyte-stimulating hormone receptor (317 aa).

Residues 1–37 (MPVQGSQRRLLGSLNSTPTATPRLGLAANQTGARCLE) lie on the Extracellular side of the membrane. The N-linked (GlcNAc...) asparagine glycan is linked to N29. A helical membrane pass occupies residues 38–63 (VSIPDGLFLSLGLVSLVENVLVVVAI). The Cytoplasmic portion of the chain corresponds to 64–72 (ARNRNLHSP). The helical transmembrane segment at 73–93 (MYCFICCLALSDLLVSGSNML) threads the bilayer. Topologically, residues 94 to 118 (ETAVFLLLEAGALAARAAVVQQLDN) are extracellular. The chain crosses the membrane as a helical span at residues 119–140 (VIDVITCSSMLSSLCFLGAIAV). The Cytoplasmic segment spans residues 141 to 163 (DRYISIFYALRYHSIVTLRRARR). The chain crosses the membrane as a helical span at residues 164–183 (VVAAIWVASVLFSTLFIAYC). Residues 184–191 (DHAAVLLC) lie on the Extracellular side of the membrane. Residues 192–211 (LVVFFLAMLVLMAVLYVHML) traverse the membrane as a helical segment. Over 212 to 240 (ARACQHAQGIAQLHKRQRPAHQGVGLKGA) the chain is Cytoplasmic. A helical transmembrane segment spans residues 241–266 (ATLTILLGIFFLCWGPFFLHLTLIVL). The Extracellular portion of the chain corresponds to 267–279 (CPQHPTCSCIFKN). A helical membrane pass occupies residues 280–300 (FNLFLTLIICNAIIDPLIYAF). Residues 301 to 317 (RSQELRRTLKKVLLCSW) are Cytoplasmic-facing. A lipid anchor (S-palmitoyl cysteine) is attached at C315.

This sequence belongs to the G-protein coupled receptor 1 family. As to quaternary structure, interacts with MGRN1, but does not undergo MGRN1-mediated ubiquitination; this interaction competes with GNAS-binding and thus inhibits agonist-induced cAMP production. Interacts with OPN3; the interaction results in a decrease in MC1R-mediated cAMP signaling and ultimately a decrease in melanin production in melanocytes.

The protein localises to the cell membrane. In terms of biological role, receptor for MSH (alpha, beta and gamma) and ACTH. The activity of this receptor is mediated by G proteins which activate adenylate cyclase. Mediates melanogenesis, the production of eumelanin (black/brown) and phaeomelanin (red/yellow), via regulation of cAMP signaling in melanocytes. This Trachypithecus obscurus (Dusky leaf-monkey) protein is Melanocyte-stimulating hormone receptor (MC1R).